Here is a 253-residue protein sequence, read N- to C-terminus: Ribonuclease HII (253 aa).

Residues 70-253 (DLIAGVDEVG…KTFAPIKDIL (184 aa)) form the RNase H type-2 domain. 3 residues coordinate a divalent metal cation: Asp-76, Glu-77, and Asp-168.

This sequence belongs to the RNase HII family. Mn(2+) serves as cofactor. Requires Mg(2+) as cofactor.

Its subcellular location is the cytoplasm. The catalysed reaction is Endonucleolytic cleavage to 5'-phosphomonoester.. In terms of biological role, endonuclease that specifically degrades the RNA of RNA-DNA hybrids. This is Ribonuclease HII from Leuconostoc mesenteroides subsp. mesenteroides (strain ATCC 8293 / DSM 20343 / BCRC 11652 / CCM 1803 / JCM 6124 / NCDO 523 / NBRC 100496 / NCIMB 8023 / NCTC 12954 / NRRL B-1118 / 37Y).